Consider the following 270-residue polypeptide: Feruloyl esterase C (270 aa).

Residues methionine 1 to glycine 21 form the signal peptide.

Belongs to the faeC family.

The protein localises to the secreted. The enzyme catalyses feruloyl-polysaccharide + H2O = ferulate + polysaccharide.. Its function is as follows. Involved in degradation of plant cell walls. Hydrolyzes the feruloyl-arabinose ester bond in arabinoxylans, and the feruloyl-galactose ester bond in pectin. Active against paranitrophenyl-acetate, methyl ferulate and wheat arabinoxylan. The protein is Feruloyl esterase C (faeC) of Emericella nidulans (strain FGSC A4 / ATCC 38163 / CBS 112.46 / NRRL 194 / M139) (Aspergillus nidulans).